Consider the following 100-residue polypeptide: Aspartyl/glutamyl-tRNA(Asn/Gln) amidotransferase subunit C (100 aa).

The protein belongs to the GatC family. Heterotrimer of A, B and C subunits.

The catalysed reaction is L-glutamyl-tRNA(Gln) + L-glutamine + ATP + H2O = L-glutaminyl-tRNA(Gln) + L-glutamate + ADP + phosphate + H(+). The enzyme catalyses L-aspartyl-tRNA(Asn) + L-glutamine + ATP + H2O = L-asparaginyl-tRNA(Asn) + L-glutamate + ADP + phosphate + 2 H(+). Functionally, allows the formation of correctly charged Asn-tRNA(Asn) or Gln-tRNA(Gln) through the transamidation of misacylated Asp-tRNA(Asn) or Glu-tRNA(Gln) in organisms which lack either or both of asparaginyl-tRNA or glutaminyl-tRNA synthetases. The reaction takes place in the presence of glutamine and ATP through an activated phospho-Asp-tRNA(Asn) or phospho-Glu-tRNA(Gln). The sequence is that of Aspartyl/glutamyl-tRNA(Asn/Gln) amidotransferase subunit C from Streptococcus suis (strain 98HAH33).